A 509-amino-acid chain; its full sequence is MRKPTALIILDGFGLREETYGNAVAQAKKPNFDGYWNKFPHTTLTACGEAVGLPEGQMGNSEVGHLNIGAGRIVYQSLTRVNVAIREGEFDKNETFQSAIKSVKEKGTALHLFGLLSDGGVHSHMNHMFALLRLAAKEGVEKVYIHAFLDGRDVGPKTAQSYIDATNEVMKETGVGQFATISGRYYSMDRDKRWDRVEKCYRAMVNGEGPTYKSAEECVEDSYANGIYDEFVLPSVIVNEDNTPVATINDDDAVIFYNFRPDRAIQIARVFTNEDFREFDRGEKVPHIPEFVCMTHFSETVDGYVAFKPMNLDNTLGEVVAQAGLKQLRIAETEKYPHVTFFFSGGREAEFPGEERILINSPKVATYDLKPEMSIYEVTDALVNEIENDKHDVIILNFANCDMVGHSGMMEPTIKAVEATDECLGKVVEAILAKDGVALITADHGNADEELTSEGEPMTAHTTNPVPFIVTKNDVELREGGILGDIAPTMLTLLGVEQPKEMTGKTIIK.

Mn(2+) is bound at residue D11. Residue Y35 is modified to Phosphotyrosine. S61 contributes to the Mn(2+) binding site. S61 functions as the Phosphoserine intermediate in the catalytic mechanism. Residues H122, 152-153, R184, R190, 260-263, and K335 each bind substrate; these read RD and RPDR. Positions 402, 406, 443, 444, and 461 each coordinate Mn(2+).

It belongs to the BPG-independent phosphoglycerate mutase family. As to quaternary structure, monomer. Mn(2+) serves as cofactor.

It carries out the reaction (2R)-2-phosphoglycerate = (2R)-3-phosphoglycerate. It participates in carbohydrate degradation; glycolysis; pyruvate from D-glyceraldehyde 3-phosphate: step 3/5. Essential for rapid growth and for sporulation. Catalyzes the interconversion of 2-phosphoglycerate and 3-phosphoglycerate. The protein is 2,3-bisphosphoglycerate-independent phosphoglycerate mutase of Bacillus thuringiensis (strain Al Hakam).